The primary structure comprises 361 residues: Hsc70-interacting protein (361 aa).

The segment at 39–98 (GGTIPPAPASTSTDETSKGKAEEQPEEPVKSPEPESEESDLEIDNEGVIEPDNDDPQEMG) is disordered. Basic and acidic residues predominate over residues 53–71 (ETSKGKAEEQPEEPVKSPE). The segment covering 72-98 (PESEESDLEIDNEGVIEPDNDDPQEMG) has biased composition (acidic residues). 3 TPR repeats span residues 112 to 145 (ANEKKMEAINALSEGDLQKAVNLFTDAIKLNPCL), 147 to 179 (ILYAKRASVFVKLQKPNAAIRDCDRAIKINPDS), and 181 to 213 (QTYKWRGKAHRLLGHWEEAAHDLALACKLDYDE). Residues 254–270 (KAREEHERAQREEEARR) are compositionally biased toward basic and acidic residues. A disordered region spans residues 254 to 292 (KAREEHERAQREEEARRQAGGAQFGGFPGGFPGGFPGAM). A compositionally biased stretch (gly residues) spans 275 to 292 (AQFGGFPGGFPGGFPGAM). In terms of domain architecture, STI1 spans 311-350 (DPEVLAAMQDPEVMAAFQDVAQNPANMSKYQNNPKVMSLI).

The protein belongs to the FAM10 family. Homotetramer. Interacts with HSC70 as well as DNAJ homologs and HSP90.

It localises to the cytoplasm. One HIP oligomer binds the ATPase domains of at least two HSC70 molecules dependent on activation of the HSC70 ATPase by HSP40. Stabilizes the ADP state of HSC70 that has a high affinity for substrate protein. Through its own chaperone activity, it may contribute to the interaction of HSC70 with various target proteins. This chain is Hsc70-interacting protein (ST13), found in Gallus gallus (Chicken).